The following is a 407-amino-acid chain: Aminomethyltransferase, mitochondrial (407 aa).

The transit peptide at 1 to 29 (MRGGLWQLGQSITRRLGQSDKKTIARRCY) directs the protein to the mitochondrion. Substrate contacts are provided by Glu-234, Arg-265, and Tyr-403.

The protein belongs to the GcvT family. In terms of assembly, the glycine cleavage system is composed of four proteins: P, T, L and H.

The protein resides in the mitochondrion. It catalyses the reaction N(6)-[(R)-S(8)-aminomethyldihydrolipoyl]-L-lysyl-[protein] + (6S)-5,6,7,8-tetrahydrofolate = N(6)-[(R)-dihydrolipoyl]-L-lysyl-[protein] + (6R)-5,10-methylene-5,6,7,8-tetrahydrofolate + NH4(+). Its function is as follows. The glycine cleavage system catalyzes the degradation of glycine. The sequence is that of Aminomethyltransferase, mitochondrial (GDCST) from Flaveria pringlei.